The sequence spans 765 residues: Membrane metallo-endopeptidase-like 1 (765 aa).

The Cytoplasmic segment spans residues 1–19 (MVERAGWCRKKSPGFVEYG). The chain crosses the membrane as a helical; Signal-anchor for type II membrane protein span at residues 20 to 40 (LMVLLLLLLGAIVTLGVFYSI). The Lumenal portion of the chain corresponds to 41–765 (GKQLPLLTSL…MHPMKRCRIW (725 aa)). One can recognise a Peptidase M13 domain in the interval 74 to 765 (ICTTPSCVIA…MHPMKRCRIW (692 aa)). 5 cysteine pairs are disulfide-bonded: cysteine 75-cysteine 80, cysteine 98-cysteine 750, cysteine 106-cysteine 710, cysteine 161-cysteine 425, and cysteine 636-cysteine 762. An a peptide-binding site is contributed by arginine 121. N-linked (GlcNAc...) asparagine glycans are attached at residues asparagine 163, asparagine 279, asparagine 303, and asparagine 336. Residues 523 to 549 (FENGLQNLKNNAQRSLKKLREKVDQNL) are a coiled coil. Histidine 599 serves as a coordination point for Zn(2+). Glutamate 600 is a catalytic residue. Histidine 603 and glutamate 662 together coordinate Zn(2+). Aspartate 666 serves as the catalytic Proton donor. The N-linked (GlcNAc...) asparagine glycan is linked to asparagine 694.

The protein belongs to the peptidase M13 family. It depends on Zn(2+) as a cofactor. In terms of processing, N-glycosylated. As to expression, highly expressed in testis. Also expressed in ovary. Weakly or not expressed in brain, lung, heart, liver, kidney, adrenal gland and intestine.

The protein localises to the membrane. Its subcellular location is the secreted. It catalyses the reaction Preferential cleavage of polypeptides between hydrophobic residues, particularly with Phe or Tyr at P1'.. With respect to regulation, inhibited by thiorphan and phosphoramidon. Metalloprotease involved in sperm function, possibly by modulating the processes of fertilization and early embryonic development. Degrades a broad variety of small peptides with a preference for peptides shorter than 3 kDa containing neutral bulky aliphatic or aromatic amino acid residues. Shares the same substrate specificity with MME and cleaves peptides at the same amide bond. This is Membrane metallo-endopeptidase-like 1 (Mmel1) from Mus musculus (Mouse).